We begin with the raw amino-acid sequence, 540 residues long: T-complex protein 1 subunit alpha (540 aa).

This sequence belongs to the TCP-1 chaperonin family. In terms of assembly, component of the T-complex protein 1 (TCP1) complex.

It localises to the cytoplasm. Functionally, molecular chaperone; assists the folding of proteins upon ATP hydrolysis. The polypeptide is T-complex protein 1 subunit alpha (TCP1) (Encephalitozoon cuniculi (strain GB-M1) (Microsporidian parasite)).